A 691-amino-acid polypeptide reads, in one-letter code: MTTAEDVAGNPYISDPRTDFESVEDVDAETAREQADQLREALRYHDYRYYVENDPVIGDRAYDALFSRLQRLESAFNLDTDGSPTQRVGGEPLDELPDVEHVARMGSIDQGGEEADVREFDSRVRNGLDGDVQYFCEPKFDGLSVEIVYEDGVYQRAATRGDGEVGEDVTENVRTISSVPQRLRGDYPDFLAVRGEVYIPRDAFTTFNRERVERGEDPFANPRNAAAGTLRQLDPSVTAERPLSIFFFGVLDASVDFESHSELHERFPEWGLRVCDRTAVVDDIDAAIDYRNEQQQARDDLDYEIDGVVIKVDDMDACDDLGSTARAPRWAFAYKFPARKEETTVRDIVVQVGRTGRLTPVALMDPVEVGGVTVSRASLHNPSLIADLGVDVGDRVRIKRAGDVIPDVVEVLDDDGDGHFEFPETCPACDSPVEHDGPMAFCTGGLTCPAQRERSVEHYASRDALDIEGVGEKAVQQLLDAGLVSDPADLYDLTVEDLTGLEGWGETSARNLVDGMDSAREPPLADFLVALGIPEVGTVTARNLAQEFGTFEAILDAADEGDTDAFEAVPDVGQTVARSIVEFFEGEGNRAVIDRLLDHVEPQAAEETDGDALDGQTFVFTGSLDGYTRGEAQELVERNDGSATSSVSGNTDYLVLGDNPGQRKQDDAAAHDVETLTEDEFEELLDDAGVL.

Positions 1-22 (MTTAEDVAGNPYISDPRTDFES) are disordered. NAD(+) is bound by residues 59–63 (DRAYD), 107–108 (SI), and E137. K139 functions as the N6-AMP-lysine intermediate in the catalytic mechanism. Positions 160, 196, 311, and 335 each coordinate NAD(+). Residues C426, C429, C442, and C448 each contribute to the Zn(2+) site. The region spanning 608–691 (TDGDALDGQT…EELLDDAGVL (84 aa)) is the BRCT domain. The tract at residues 637–667 (ERNDGSATSSVSGNTDYLVLGDNPGQRKQDD) is disordered. Positions 641-651 (GSATSSVSGNT) are enriched in polar residues.

It belongs to the NAD-dependent DNA ligase family. LigA subfamily. Mg(2+) serves as cofactor. Requires Mn(2+) as cofactor.

The catalysed reaction is NAD(+) + (deoxyribonucleotide)n-3'-hydroxyl + 5'-phospho-(deoxyribonucleotide)m = (deoxyribonucleotide)n+m + AMP + beta-nicotinamide D-nucleotide.. Its function is as follows. DNA ligase that catalyzes the formation of phosphodiester linkages between 5'-phosphoryl and 3'-hydroxyl groups in double-stranded DNA using NAD as a coenzyme and as the energy source for the reaction. It is essential for DNA replication and repair of damaged DNA. This is DNA ligase from Haloarcula marismortui (strain ATCC 43049 / DSM 3752 / JCM 8966 / VKM B-1809) (Halobacterium marismortui).